A 176-amino-acid polypeptide reads, in one-letter code: Ribosome rescue factor SmrB (176 aa).

The 76-residue stretch at 93-168 (LDLHGYRQSE…GDAALLVLID (76 aa)) folds into the Smr domain.

Belongs to the SmrB family. In terms of assembly, associates with collided ribosomes, but not with correctly translating polysomes.

Functionally, acts as a ribosome collision sensor. Detects stalled/collided disomes (pairs of ribosomes where the leading ribosome is stalled and a second ribosome has collided with it) and endonucleolytically cleaves mRNA at the 5' boundary of the stalled ribosome. Stalled/collided disomes form a new interface (primarily via the 30S subunits) that binds SmrB. Cleaved mRNA becomes available for tmRNA ligation, leading to ribosomal subunit dissociation and rescue of stalled ribosomes. The sequence is that of Ribosome rescue factor SmrB from Shewanella putrefaciens (strain CN-32 / ATCC BAA-453).